We begin with the raw amino-acid sequence, 178 residues long: UPF0114 protein HPSH_00970 (178 aa).

A run of 4 helical transmembrane segments spans residues 15-35 (WLLAPLCIAMSLVLVVLGYVF), 54-74 (LVLSALGLVDLLFMAGLVLMV), 102-122 (FNALKLKVSLSIVAISAIFLL), and 145-165 (PIFWQVVIHLVFVCSALLAAV).

The protein belongs to the UPF0114 family.

It is found in the cell membrane. In Helicobacter pylori (strain Shi470), this protein is UPF0114 protein HPSH_00970.